Consider the following 308-residue polypeptide: tRNA pseudouridine synthase B (308 aa).

Asp47 serves as the catalytic Nucleophile.

The protein belongs to the pseudouridine synthase TruB family. Type 1 subfamily.

It catalyses the reaction uridine(55) in tRNA = pseudouridine(55) in tRNA. Responsible for synthesis of pseudouridine from uracil-55 in the psi GC loop of transfer RNAs. This is tRNA pseudouridine synthase B from Xanthomonas oryzae pv. oryzae (strain MAFF 311018).